The sequence spans 397 residues: Tryptophan synthase beta chain (397 aa).

N6-(pyridoxal phosphate)lysine is present on lysine 87.

The protein belongs to the TrpB family. Tetramer of two alpha and two beta chains. Pyridoxal 5'-phosphate is required as a cofactor.

The catalysed reaction is (1S,2R)-1-C-(indol-3-yl)glycerol 3-phosphate + L-serine = D-glyceraldehyde 3-phosphate + L-tryptophan + H2O. Its pathway is amino-acid biosynthesis; L-tryptophan biosynthesis; L-tryptophan from chorismate: step 5/5. Its function is as follows. The beta subunit is responsible for the synthesis of L-tryptophan from indole and L-serine. This chain is Tryptophan synthase beta chain, found in Escherichia coli O139:H28 (strain E24377A / ETEC).